The primary structure comprises 252 residues: ATP synthase subunit a (252 aa).

A run of 5 helical transmembrane segments spans residues 33 to 53 (GQVFITTWIVMGILIVAALAA), 92 to 112 (VPFVGTLFLFIFVCNWSGALV), 130 to 150 (DINTTVALALLVSLAYFYAGL), 196 to 216 (LVVGVLVLLVPLFVPLPVMAL), and 217 to 237 (GLFTSAIQALVFATLAATYIG).

It belongs to the ATPase A chain family. As to quaternary structure, F-type ATPases have 2 components, CF(1) - the catalytic core - and CF(0) - the membrane proton channel. CF(1) has five subunits: alpha(3), beta(3), gamma(1), delta(1), epsilon(1). CF(0) has three main subunits: a(1), b(2) and c(9-12). The alpha and beta chains form an alternating ring which encloses part of the gamma chain. CF(1) is attached to CF(0) by a central stalk formed by the gamma and epsilon chains, while a peripheral stalk is formed by the delta and b chains.

It is found in the cellular thylakoid membrane. Its function is as follows. Key component of the proton channel; it plays a direct role in the translocation of protons across the membrane. In Synechococcus sp. (strain PCC 6716), this protein is ATP synthase subunit a.